A 191-amino-acid polypeptide reads, in one-letter code: Large ribosomal subunit protein uL6B (191 aa).

It belongs to the universal ribosomal protein uL6 family. Component of the large ribosomal subunit (LSU). Mature yeast ribosomes consist of a small (40S) and a large (60S) subunit. The 40S small subunit contains 1 molecule of ribosomal RNA (18S rRNA) and 33 different proteins (encoded by 57 genes). The large 60S subunit contains 3 rRNA molecules (25S, 5.8S and 5S rRNA) and 46 different proteins (encoded by 81 genes).

The protein resides in the cytoplasm. Component of the ribosome, a large ribonucleoprotein complex responsible for the synthesis of proteins in the cell. The small ribosomal subunit (SSU) binds messenger RNAs (mRNAs) and translates the encoded message by selecting cognate aminoacyl-transfer RNA (tRNA) molecules. The large subunit (LSU) contains the ribosomal catalytic site termed the peptidyl transferase center (PTC), which catalyzes the formation of peptide bonds, thereby polymerizing the amino acids delivered by tRNAs into a polypeptide chain. The nascent polypeptides leave the ribosome through a tunnel in the LSU and interact with protein factors that function in enzymatic processing, targeting, and the membrane insertion of nascent chains at the exit of the ribosomal tunnel. The protein is Large ribosomal subunit protein uL6B of Saccharomyces cerevisiae (strain ATCC 204508 / S288c) (Baker's yeast).